A 142-amino-acid chain; its full sequence is Large ribosomal subunit protein uL13 (142 aa).

The protein belongs to the universal ribosomal protein uL13 family. Part of the 50S ribosomal subunit.

This protein is one of the early assembly proteins of the 50S ribosomal subunit, although it is not seen to bind rRNA by itself. It is important during the early stages of 50S assembly. This is Large ribosomal subunit protein uL13 from Geobacter sp. (strain M21).